The primary structure comprises 887 residues: MAELPQSRINERNITSEMRESFLDYAMSVIVARALPDVRDGLKPVHRRILYGLNEQGMTPDKSYKKSARIVGDVMGKYHPHGDSSIYEAMVRMAQDFSYRYPLVDGQGNFGSMDGDGAAAMRYTEARMTKITLELLRDINKDTIDFIDNYDGNEREPSVLPARFPNLLANGASGIAVGMATNIPPHNLTELINGVLSLSKNPDISIAELMEDIEGPDFPTAGLILGKSGIRRAYETGRGSIQMRSRAVIEERGGGRQRIVVTEIPFQVNKARMIEKIAELVRDKKIDGITDLRDETSLRTGVRVVIDVRKDANASVILNNLYKQTPLQTSFGVNMIALVNGRPKLINLKEALVHYLEHQKTVVRRRTQYNLRKAKDRAHILEGLRIALDHIDEIISTIRESDTDKVAMESLQQRFKLSEKQAQAILDMRLRRLTGLERDKIEAEYNELLNYISELEAILADEEVLLQLVRDELTEIRDRFGDDRRTEIQLGGFENLEDEDLIPEEQIVITLSHNNYIKRLPVSTYRAQNRGGRGVQGMNTLEEDFVSQLVTLSTHDHVLFFTNKGRVYKLKGYEVPELSRQSKGIPVVNAIELENDEVISTMIAVKDLESEDNFLVFATKRGVVKRSALSNFSRINRNGKIAISFREDDELIAVRLTSGQEDILIGTSHASLIRFPESTLRPLGRTATGVKGITLREGDEVVGLDVAHANSVDEVLVVTENGYGKRTPVNDYRLSNRGGKGIKTATITERNGNVVCITTVTGEEDLMIVTNAGVIIRLDVADISQNGRAAQGVRLIRLGDDQFVSTVAKVKEDAEDETNEDEQSTSTVSEDGTEQQREAVVNDETPGNAIHTEVIDSEENDEDGRIEVRQDFMDRVEEDIQQSSDEE.

The Topo IIA-type catalytic domain maps to 35–501; the sequence is LPDVRDGLKP…GFENLEDEDL (467 aa). Tyrosine 123 acts as the O-(5'-phospho-DNA)-tyrosine intermediate in catalysis. Residues 528 to 534 carry the GyrA-box motif; sequence QNRGGRG. The tract at residues 811 to 864 is disordered; that stretch reads KEDAEDETNEDEQSTSTVSEDGTEQQREAVVNDETPGNAIHTEVIDSEENDEDG. Residues 813 to 823 are compositionally biased toward acidic residues; the sequence is DAEDETNEDEQ.

Belongs to the type II topoisomerase GyrA/ParC subunit family. As to quaternary structure, heterotetramer, composed of two GyrA and two GyrB chains. In the heterotetramer, GyrA contains the active site tyrosine that forms a transient covalent intermediate with DNA, while GyrB binds cofactors and catalyzes ATP hydrolysis.

Its subcellular location is the cytoplasm. It carries out the reaction ATP-dependent breakage, passage and rejoining of double-stranded DNA.. Its function is as follows. A type II topoisomerase that negatively supercoils closed circular double-stranded (ds) DNA in an ATP-dependent manner to modulate DNA topology and maintain chromosomes in an underwound state. Negative supercoiling favors strand separation, and DNA replication, transcription, recombination and repair, all of which involve strand separation. Also able to catalyze the interconversion of other topological isomers of dsDNA rings, including catenanes and knotted rings. Type II topoisomerases break and join 2 DNA strands simultaneously in an ATP-dependent manner. The protein is DNA gyrase subunit A of Staphylococcus aureus (strain COL).